The primary structure comprises 164 residues: NADPH-dependent 7-cyano-7-deazaguanine reductase (164 aa).

The Thioimide intermediate role is filled by C55. Residue D62 is the Proton donor of the active site. Substrate contacts are provided by residues 77–79 and 96–97; these read VES and HE.

The protein belongs to the GTP cyclohydrolase I family. QueF type 1 subfamily.

The protein resides in the cytoplasm. It carries out the reaction 7-aminomethyl-7-carbaguanine + 2 NADP(+) = 7-cyano-7-deazaguanine + 2 NADPH + 3 H(+). Its pathway is tRNA modification; tRNA-queuosine biosynthesis. In terms of biological role, catalyzes the NADPH-dependent reduction of 7-cyano-7-deazaguanine (preQ0) to 7-aminomethyl-7-deazaguanine (preQ1). The sequence is that of NADPH-dependent 7-cyano-7-deazaguanine reductase from Bacillus velezensis (strain DSM 23117 / BGSC 10A6 / LMG 26770 / FZB42) (Bacillus amyloliquefaciens subsp. plantarum).